Reading from the N-terminus, the 239-residue chain is Phosphoadenosine 5'-phosphosulfate reductase (239 aa).

The Nucleophile; cysteine thiosulfonate intermediate role is filled by Cys235.

The protein belongs to the PAPS reductase family. CysH subfamily.

Its subcellular location is the cytoplasm. It carries out the reaction [thioredoxin]-disulfide + sulfite + adenosine 3',5'-bisphosphate + 2 H(+) = [thioredoxin]-dithiol + 3'-phosphoadenylyl sulfate. The protein operates within sulfur metabolism; hydrogen sulfide biosynthesis; sulfite from sulfate: step 3/3. Functionally, catalyzes the formation of sulfite from phosphoadenosine 5'-phosphosulfate (PAPS) using thioredoxin as an electron donor. In Thiocapsa roseopersicina, this protein is Phosphoadenosine 5'-phosphosulfate reductase.